The sequence spans 275 residues: Pantothenate synthetase (275 aa).

Position 26 to 33 (26 to 33 (MGFLHEGH)) interacts with ATP. His33 serves as the catalytic Proton donor. Residue Gln57 participates in (R)-pantoate binding. Gln57 provides a ligand contact to beta-alanine. Residue 143 to 146 (GQKD) coordinates ATP. Residue Gln149 coordinates (R)-pantoate. Residues Ala172 and 180–183 (RSSR) contribute to the ATP site.

Belongs to the pantothenate synthetase family. In terms of assembly, homodimer.

It is found in the cytoplasm. It carries out the reaction (R)-pantoate + beta-alanine + ATP = (R)-pantothenate + AMP + diphosphate + H(+). Its pathway is cofactor biosynthesis; (R)-pantothenate biosynthesis; (R)-pantothenate from (R)-pantoate and beta-alanine: step 1/1. Its function is as follows. Catalyzes the condensation of pantoate with beta-alanine in an ATP-dependent reaction via a pantoyl-adenylate intermediate. The protein is Pantothenate synthetase of Gluconobacter oxydans (strain 621H) (Gluconobacter suboxydans).